We begin with the raw amino-acid sequence, 276 residues long: Rhomboid protease GlpG (276 aa).

The next 6 membrane-spanning stretches (helical) occupy residues glycine 94–leucine 114, alanine 142–glycine 162, leucine 169–glutamine 189, phenylalanine 192–tryptophan 212, leucine 229–methionine 249, and alanine 250–leucine 270. The Nucleophile role is filled by serine 201. The active site involves histidine 254.

Belongs to the peptidase S54 family.

The protein resides in the cell inner membrane. The catalysed reaction is Cleaves type-1 transmembrane domains using a catalytic dyad composed of serine and histidine that are contributed by different transmembrane domains.. In terms of biological role, rhomboid-type serine protease that catalyzes intramembrane proteolysis. The sequence is that of Rhomboid protease GlpG from Escherichia coli O7:K1 (strain IAI39 / ExPEC).